The primary structure comprises 270 residues: uncharacterized protein (270 aa).

This is an uncharacterized protein from Bacillus anthracis.